The primary structure comprises 932 residues: Isoleucine--tRNA ligase (932 aa).

A 'HIGH' region motif is present at residues 58–68 (PYANGDIHIGH). Residue Glu570 coordinates L-isoleucyl-5'-AMP. The short motif at 611-615 (KMSKS) is the 'KMSKS' region element. Lys614 contributes to the ATP binding site. Zn(2+) is bound by residues Cys895, Cys898, Cys915, and Cys918.

Belongs to the class-I aminoacyl-tRNA synthetase family. IleS type 1 subfamily. In terms of assembly, monomer. The cofactor is Zn(2+).

Its subcellular location is the cytoplasm. The catalysed reaction is tRNA(Ile) + L-isoleucine + ATP = L-isoleucyl-tRNA(Ile) + AMP + diphosphate. Catalyzes the attachment of isoleucine to tRNA(Ile). As IleRS can inadvertently accommodate and process structurally similar amino acids such as valine, to avoid such errors it has two additional distinct tRNA(Ile)-dependent editing activities. One activity is designated as 'pretransfer' editing and involves the hydrolysis of activated Val-AMP. The other activity is designated 'posttransfer' editing and involves deacylation of mischarged Val-tRNA(Ile). The polypeptide is Isoleucine--tRNA ligase (Dechloromonas aromatica (strain RCB)).